A 309-amino-acid polypeptide reads, in one-letter code: Nucleotide-binding protein cgR_1639 (309 aa).

32-39 provides a ligand contact to ATP; the sequence is GMSGAGLS. 83–86 provides a ligand contact to GTP; the sequence is DVRS.

This sequence belongs to the RapZ-like family.

Displays ATPase and GTPase activities. This chain is Nucleotide-binding protein cgR_1639, found in Corynebacterium glutamicum (strain R).